Consider the following 331-residue polypeptide: Phosphoribosylformylglycinamidine cyclo-ligase (331 aa).

Belongs to the AIR synthase family.

The protein localises to the cytoplasm. The enzyme catalyses 2-formamido-N(1)-(5-O-phospho-beta-D-ribosyl)acetamidine + ATP = 5-amino-1-(5-phospho-beta-D-ribosyl)imidazole + ADP + phosphate + H(+). The protein operates within purine metabolism; IMP biosynthesis via de novo pathway; 5-amino-1-(5-phospho-D-ribosyl)imidazole from N(2)-formyl-N(1)-(5-phospho-D-ribosyl)glycinamide: step 2/2. This is Phosphoribosylformylglycinamidine cyclo-ligase from Clostridium botulinum (strain ATCC 19397 / Type A).